Consider the following 116-residue polypeptide: Fluoride-specific ion channel FluC 1 (116 aa).

The next 4 helical transmembrane spans lie at 2 to 22 (LVLV…RYGI), 33 to 53 (PLPI…GWIL), 63 to 83 (IFLG…INEL), and 96 to 116 (WEYF…GTLI). Residues G71 and T74 each coordinate Na(+).

The protein belongs to the fluoride channel Fluc/FEX (TC 1.A.43) family.

Its subcellular location is the cell membrane. The catalysed reaction is fluoride(in) = fluoride(out). Its activity is regulated as follows. Na(+) is not transported, but it plays an essential structural role and its presence is essential for fluoride channel function. Fluoride-specific ion channel. Important for reducing fluoride concentration in the cell, thus reducing its toxicity. The sequence is that of Fluoride-specific ion channel FluC 1 from Lactiplantibacillus plantarum (strain ATCC BAA-793 / NCIMB 8826 / WCFS1) (Lactobacillus plantarum).